The following is a 250-amino-acid chain: Orotidine 5'-phosphate decarboxylase (250 aa).

Substrate-binding positions include Asp9, Lys40, 67–76, Thr132, Arg190, Gln204, Gly224, and Arg225; that span reads DLKFHDIPNT. The active-site Proton donor is Lys69.

It belongs to the OMP decarboxylase family. Type 1 subfamily. In terms of assembly, homodimer.

The catalysed reaction is orotidine 5'-phosphate + H(+) = UMP + CO2. It participates in pyrimidine metabolism; UMP biosynthesis via de novo pathway; UMP from orotate: step 2/2. Functionally, catalyzes the decarboxylation of orotidine 5'-monophosphate (OMP) to uridine 5'-monophosphate (UMP). The sequence is that of Orotidine 5'-phosphate decarboxylase from Nitratidesulfovibrio vulgaris (strain DSM 19637 / Miyazaki F) (Desulfovibrio vulgaris).